Consider the following 155-residue polypeptide: Interleukin-2 (155 aa).

The signal sequence occupies residues 1–20 (MYKIQLLSCIALTLALVANG). Thr23 carries O-linked (GalNAc...) threonine glycosylation. Cys79 and Cys127 are joined by a disulfide.

Belongs to the IL-2 family.

Its subcellular location is the secreted. In terms of biological role, cytokine produced by activated CD4-positive helper T-cells and to a lesser extend activated CD8-positive T-cells and natural killer (NK) cells that plays pivotal roles in the immune response and tolerance. Binds to a receptor complex composed of either the high-affinity trimeric IL-2R (IL2RA/CD25, IL2RB/CD122 and IL2RG/CD132) or the low-affinity dimeric IL-2R (IL2RB and IL2RG). Interaction with the receptor leads to oligomerization and conformation changes in the IL-2R subunits resulting in downstream signaling starting with phosphorylation of JAK1 and JAK3. In turn, JAK1 and JAK3 phosphorylate the receptor to form a docking site leading to the phosphorylation of several substrates including STAT5. This process leads to activation of several pathways including STAT, phosphoinositide-3-kinase/PI3K and mitogen-activated protein kinase/MAPK pathways. Functions as a T-cell growth factor and can increase NK-cell cytolytic activity as well. Promotes strong proliferation of activated B-cells and subsequently immunoglobulin production. Plays a pivotal role in regulating the adaptive immune system by controlling the survival and proliferation of regulatory T-cells, which are required for the maintenance of immune tolerance. Moreover, participates in the differentiation and homeostasis of effector T-cell subsets, including Th1, Th2, Th17 as well as memory CD8-positive T-cells. This Bos taurus (Bovine) protein is Interleukin-2 (IL2).